A 444-amino-acid polypeptide reads, in one-letter code: Homogentisate 1,2-dioxygenase (444 aa).

Residues 92 to 111 (GDSADVPPTPPNQLRWDPLP) form a disordered region. His298 serves as the catalytic Proton acceptor. Positions 341 and 347 each coordinate Fe cation. The homogentisate site is built by Tyr356 and His377. His377 provides a ligand contact to Fe cation.

This sequence belongs to the homogentisate dioxygenase family. In terms of assembly, hexamer; dimer of trimers. It depends on Fe cation as a cofactor.

The catalysed reaction is homogentisate + O2 = 4-maleylacetoacetate + H(+). Its pathway is amino-acid degradation; L-phenylalanine degradation; acetoacetate and fumarate from L-phenylalanine: step 4/6. Involved in the catabolism of homogentisate (2,5-dihydroxyphenylacetate or 2,5-OH-PhAc), a central intermediate in the degradation of phenylalanine and tyrosine. Catalyzes the oxidative ring cleavage of the aromatic ring of homogentisate to yield maleylacetoacetate. This is Homogentisate 1,2-dioxygenase from Burkholderia vietnamiensis (strain G4 / LMG 22486) (Burkholderia cepacia (strain R1808)).